The sequence spans 47 residues: Delta-stichotoxin-Hcr1d (47 aa).

3 disulfides stabilise this stretch: Cys-3-Cys-43, Cys-5-Cys-33, and Cys-26-Cys-44.

The protein belongs to the sea anemone sodium channel inhibitory toxin family. Type II subfamily.

It localises to the secreted. The protein localises to the nematocyst. Its function is as follows. Binds to site 3 of voltage-gated sodium channels and inhibits the inactivation process. The protein is Delta-stichotoxin-Hcr1d of Radianthus crispa (Leathery sea anemone).